The following is a 288-amino-acid chain: Small ribosomal subunit protein uS2 (288 aa).

Residues 259 to 276 are compositionally biased toward low complexity; that stretch reads EAAPAAEEAPAAEAEAAA. Residues 259-288 are disordered; the sequence is EAAPAAEEAPAAEAEAAATDTSSESDKTEA.

It belongs to the universal ribosomal protein uS2 family.

This is Small ribosomal subunit protein uS2 from Maricaulis maris (strain MCS10) (Caulobacter maris).